Consider the following 97-residue polypeptide: Putative membrane protein insertion efficiency factor (97 aa).

The protein belongs to the UPF0161 family.

It is found in the cell membrane. In terms of biological role, could be involved in insertion of integral membrane proteins into the membrane. In Lactobacillus johnsonii (strain CNCM I-12250 / La1 / NCC 533), this protein is Putative membrane protein insertion efficiency factor.